The following is a 317-amino-acid chain: Acetyl-coenzyme A carboxylase carboxyl transferase subunit alpha (317 aa).

Residues 39–293 form the CoA carboxyltransferase C-terminal domain; sequence RLKKKSISLT…KTSLAQGVAE (255 aa).

The protein belongs to the AccA family. In terms of assembly, acetyl-CoA carboxylase is a heterohexamer composed of biotin carboxyl carrier protein (AccB), biotin carboxylase (AccC) and two subunits each of ACCase subunit alpha (AccA) and ACCase subunit beta (AccD).

The protein resides in the cytoplasm. The enzyme catalyses N(6)-carboxybiotinyl-L-lysyl-[protein] + acetyl-CoA = N(6)-biotinyl-L-lysyl-[protein] + malonyl-CoA. Its pathway is lipid metabolism; malonyl-CoA biosynthesis; malonyl-CoA from acetyl-CoA: step 1/1. Component of the acetyl coenzyme A carboxylase (ACC) complex. First, biotin carboxylase catalyzes the carboxylation of biotin on its carrier protein (BCCP) and then the CO(2) group is transferred by the carboxyltransferase to acetyl-CoA to form malonyl-CoA. In Marinobacter nauticus (strain ATCC 700491 / DSM 11845 / VT8) (Marinobacter aquaeolei), this protein is Acetyl-coenzyme A carboxylase carboxyl transferase subunit alpha.